The chain runs to 266 residues: Respiratory nitrate reductase beta chain (266 aa).

4Fe-4S ferredoxin-type domains are found at residues Val3–Asn32 and Trp30–Glu61. [4Fe-4S] cluster is bound by residues Cys12, Cys15, Cys18, Cys22, Cys39, Cys42, and Cys47. [3Fe-4S] cluster is bound by residues Cys51 and Cys73. [4Fe-4S] cluster is bound by residues Cys77, Cys81, Cys84, Cys96, and Cys100.

As to quaternary structure, heterotrimer composed of an alpha, a beta and a gamma chain. Alpha and beta are catalytic chains; gamma chains are involved in binding the enzyme complex to the cytoplasmic membrane. It depends on [4Fe-4S] cluster as a cofactor. Requires [3Fe-4S] cluster as cofactor.

It is found in the cell membrane. The protein localises to the cytoplasm. It carries out the reaction nitrate + a quinol = a quinone + nitrite + H2O. Its activity is regulated as follows. Inhibited by micromolar concentrations of azide. Functionally, the nitrate reductase enzyme complex allows Bradyrhizobium sp. USDA 3045 to use nitrate as an electron acceptor during anaerobic growth. The beta chain is an electron transfer unit containing four cysteine clusters involved in the formation of iron-sulfur centers. Electrons are transferred from the gamma chain to the molybdenum cofactor of the alpha subunit. The sequence is that of Respiratory nitrate reductase beta chain (narH) from Bradyrhizobium sp.